Reading from the N-terminus, the 352-residue chain is Quinolinate synthase (352 aa).

Residues histidine 55 and serine 72 each coordinate iminosuccinate. Cysteine 117 is a [4Fe-4S] cluster binding site. Iminosuccinate contacts are provided by residues 143 to 145 and serine 160; that span reads YVN. Cysteine 204 lines the [4Fe-4S] cluster pocket. Iminosuccinate-binding positions include 230–232 and threonine 258; that span reads HPE. Cysteine 303 is a [4Fe-4S] cluster binding site.

It belongs to the quinolinate synthase family. Type 2 subfamily. It depends on [4Fe-4S] cluster as a cofactor.

It localises to the cytoplasm. It carries out the reaction iminosuccinate + dihydroxyacetone phosphate = quinolinate + phosphate + 2 H2O + H(+). It participates in cofactor biosynthesis; NAD(+) biosynthesis; quinolinate from iminoaspartate: step 1/1. Its function is as follows. Catalyzes the condensation of iminoaspartate with dihydroxyacetone phosphate to form quinolinate. The chain is Quinolinate synthase from Mycobacterium leprae (strain Br4923).